The primary structure comprises 246 residues: V-type proton ATPase subunit D 1 (246 aa).

It belongs to the V-ATPase D subunit family. V-ATPase is a heteromultimeric enzyme made up of two complexes: the ATP-hydrolytic V1 complex and the proton translocation V0 complex. The V1 complex consists of three catalytic AB heterodimers that form a heterohexamer, three peripheral stalks each consisting of EG heterodimers, one central rotor including subunits D and F, and the regulatory subunits C and H. The proton translocation complex V0 consists of the proton transport subunit a, a ring of proteolipid subunits c9c'', rotary subunit d, subunits e and f, and the accessory subunits VhaAC45 and ATP6AP2.

Its function is as follows. Subunit of the V1 complex of vacuolar(H+)-ATPase (V-ATPase), a multisubunit enzyme composed of a peripheral complex (V1) that hydrolyzes ATP and a membrane integral complex (V0) that translocates protons. V-ATPase is responsible for acidifying and maintaining the pH of intracellular compartments and in some cell types, is targeted to the plasma membrane, where it is responsible for acidifying the extracellular environment. In Drosophila melanogaster (Fruit fly), this protein is V-type proton ATPase subunit D 1 (Vha36-1).